Here is a 121-residue protein sequence, read N- to C-terminus: Inner membrane protein YhaH (121 aa).

The Periplasmic segment spans residues 1–23; the sequence is MDWYLKVLKNYVGFRGRARRKEY. The helical transmembrane segment at 24–44 threads the bilayer; the sequence is WMFILVNIIFTFVLGLLDKML. The Cytoplasmic segment spans residues 45–49; it reads GWQRA. The helical transmembrane segment at 50–70 threads the bilayer; that stretch reads GGEGILTTIYGILVFLPWWAV. Residues 71 to 80 are Periplasmic-facing; it reads QFRRLHDTDR. Residues 81–101 form a helical membrane-spanning segment; it reads SAWWALLFLIPFIGWLIIIVF. Topologically, residues 102 to 121 are cytoplasmic; the sequence is NCQAGTPGENRFGPDPKLEP.

The protein to E.coli YhaI.

It is found in the cell inner membrane. This Escherichia coli O157:H7 protein is Inner membrane protein YhaH (yhaH).